The primary structure comprises 145 residues: MVANTSMRLNQVAPVPIQLEDHGPNQLEPTHISDVLVGEHHTIKGENGQSYVVWAIRIIVNDSIYSSIVLYKRYREMEAFRNKLLDEFGNEIPPLPPKDSMSLQKLTNPLAWLEERRKGLQWFMTNVLLNPRWQRSTVVREFVLG.

A PX domain is found at 32-145 (ISDVLVGEHH…STVVREFVLG (114 aa)).

The protein belongs to the YPT35 family.

The protein localises to the endosome membrane. It is found in the vacuole membrane. In terms of biological role, recruits the lipid transfer protein VPS13 to endosomal and vacuolar membranes. This chain is Endosomal/vacuolar adapter protein YPT35 (YPT35), found in Meyerozyma guilliermondii (strain ATCC 6260 / CBS 566 / DSM 6381 / JCM 1539 / NBRC 10279 / NRRL Y-324) (Yeast).